A 154-amino-acid polypeptide reads, in one-letter code: Bacterial ferritin (154 aa).

Residues 1–145 (MQGNQAVVDY…QQLRLIELIG (145 aa)) enclose the Ferritin-like diiron domain. Fe cation is bound by residues Glu-18, Glu-51, His-54, Glu-93, Glu-127, and His-130.

Belongs to the bacterioferritin family. In terms of assembly, forms a bacterioferritin (BFR) complex with BfrB. Heterooligomer of 24 subunits, arranged as 12 dimers, that are packed together to form an approximately spherical molecule with a central cavity, in which large amounts of iron can be deposited.

It localises to the cytoplasm. The enzyme catalyses 4 Fe(2+) + O2 + 4 H(+) = 4 Fe(3+) + 2 H2O. It catalyses the reaction Fe(2+)(in) = Fe(2+)(out). Its function is as follows. Iron-storage protein. Its ferroxidase center binds Fe(2+), oxidizes it using dioxygen to Fe(3+), and participates in the subsequent Fe(3+) oxide mineral core formation within the central cavity of the BFR protein shell. Plays a role in protection against iron-mediated oxidative stress. This is Bacterial ferritin from Neisseria gonorrhoeae.